Reading from the N-terminus, the 410-residue chain is Na(+)-translocating NADH-quinone reductase subunit B (410 aa).

3 helical membrane-spanning segments follow: residues 56–76 (MMIL…YNVG), 119–139 (LFGA…GGFW), and 159–179 (SILF…ALGI). T232 is modified (FMN phosphoryl threonine). A run of 5 helical transmembrane segments spans residues 266-286 (GSIG…IVFA), 293-313 (IIAG…FIGS), 318-338 (MFAM…GMLF), 347-367 (SFTN…CVLI), and 377-397 (GMML…YFVA).

Belongs to the NqrB/RnfD family. Composed of six subunits; NqrA, NqrB, NqrC, NqrD, NqrE and NqrF. FMN serves as cofactor.

The protein localises to the cell inner membrane. The enzyme catalyses a ubiquinone + n Na(+)(in) + NADH + H(+) = a ubiquinol + n Na(+)(out) + NAD(+). Functionally, NQR complex catalyzes the reduction of ubiquinone-1 to ubiquinol by two successive reactions, coupled with the transport of Na(+) ions from the cytoplasm to the periplasm. NqrA to NqrE are probably involved in the second step, the conversion of ubisemiquinone to ubiquinol. This is Na(+)-translocating NADH-quinone reductase subunit B from Neisseria meningitidis serogroup B (strain ATCC BAA-335 / MC58).